A 186-amino-acid chain; its full sequence is dCTP deaminase, dUMP-forming (186 aa).

Residues 101–106, Asp119, 127–129, Gln148, Tyr162, and Gln171 each bind dCTP; these read RSSLGR and TLE. Catalysis depends on Glu129, which acts as the Proton donor/acceptor.

This sequence belongs to the dCTP deaminase family. Homotrimer.

The catalysed reaction is dCTP + 2 H2O = dUMP + NH4(+) + diphosphate. It functions in the pathway pyrimidine metabolism; dUMP biosynthesis; dUMP from dCTP: step 1/1. Functionally, bifunctional enzyme that catalyzes both the deamination of dCTP to dUTP and the hydrolysis of dUTP to dUMP without releasing the toxic dUTP intermediate. The protein is dCTP deaminase, dUMP-forming of Coprothermobacter proteolyticus (strain ATCC 35245 / DSM 5265 / OCM 4 / BT).